The following is a 30-amino-acid chain: Cyclotide mden-E (30 aa).

Positions 1–30 form a cross-link, cyclopeptide (Gly-Asn); sequence GIPCGESCVYIPCITAAIGCSCKSKVCYRN. 3 cysteine pairs are disulfide-bonded: Cys4/Cys20, Cys8/Cys22, and Cys13/Cys27.

Belongs to the cyclotide family. Bracelet subfamily. This is a cyclic peptide.

In terms of biological role, probably participates in a plant defense mechanism. The sequence is that of Cyclotide mden-E from Melicytus dentatus (Tree violet).